The sequence spans 673 residues: UvrABC system protein B (673 aa).

The Helicase ATP-binding domain maps to 26–183; that stretch reads EGLEDGLAHQ…RRLAELQYTR (158 aa). An ATP-binding site is contributed by 39-46; the sequence is GVTGSGKT. Residues 92-115 carry the Beta-hairpin motif; sequence YYDYYQPEAYVPSSDTFIEKDASV. The region spanning 431–597 is the Helicase C-terminal domain; the sequence is QVDDLLSEIR…GLNKKVVDIL (167 aa). Positions 633 to 668 constitute a UVR domain; sequence QQKIHELEGQMMQHAQNLEFEEAAQIRDQLHQLREL.

It belongs to the UvrB family. Forms a heterotetramer with UvrA during the search for lesions. Interacts with UvrC in an incision complex.

The protein localises to the cytoplasm. The UvrABC repair system catalyzes the recognition and processing of DNA lesions. A damage recognition complex composed of 2 UvrA and 2 UvrB subunits scans DNA for abnormalities. Upon binding of the UvrA(2)B(2) complex to a putative damaged site, the DNA wraps around one UvrB monomer. DNA wrap is dependent on ATP binding by UvrB and probably causes local melting of the DNA helix, facilitating insertion of UvrB beta-hairpin between the DNA strands. Then UvrB probes one DNA strand for the presence of a lesion. If a lesion is found the UvrA subunits dissociate and the UvrB-DNA preincision complex is formed. This complex is subsequently bound by UvrC and the second UvrB is released. If no lesion is found, the DNA wraps around the other UvrB subunit that will check the other stand for damage. In Salmonella arizonae (strain ATCC BAA-731 / CDC346-86 / RSK2980), this protein is UvrABC system protein B.